Consider the following 322-residue polypeptide: Corticotropin-releasing factor-binding protein (322 aa).

An N-terminal signal peptide occupies residues 1–24 (MSPNFKLQCHFILIFLTALRGESR). Cystine bridges form between C60/C81, C104/C141, C183/C205, C237/C264, and C277/C318. An N-linked (GlcNAc...) asparagine glycan is attached at N204.

Belongs to the CRF-binding protein family.

The protein resides in the secreted. In terms of biological role, binds CRF and inactivates it. May prevent inappropriate pituitary-adrenal stimulation in pregnancy. This is Corticotropin-releasing factor-binding protein (CRHBP) from Homo sapiens (Human).